The following is a 281-amino-acid chain: Insulin-like growth factor-binding protein 7 (281 aa).

A signal peptide spans 1 to 25 (MERPPRALLLGAAGLLLLLLPLSSS). The IGFBP N-terminal domain maps to 27 to 113 (SSDACGPCVP…PATLAVCVCK (87 aa)). Disulfide bonds link C31-C56, C34-C58, C39-C59, C47-C62, C70-C86, C80-C110, C112-C130, and C119-C155. The region spanning 98–157 (GAAAGGPATLAVCVCKSRYPVCGSNGITYPSGCQLRAASLRAESRGEKAITQVSKGTCEQ) is the Kazal-like domain. The Ig-like C2-type domain maps to 159–263 (PSIVTPPKDI…GQASAAAKIT (105 aa)). N-linked (GlcNAc...) asparagine glycosylation is present at N170. C180 and C247 are oxidised to a cystine. Residue S238 is modified to Phosphoserine.

May interact with VPS24/CHMP3; the relevance of such interaction however remains unclear. Interacts with CD93; this interaction plays a role in endothelial cells angiogenesis. N-glycosylated. Expressed at high levels in lung, kidney, small intestine, testis and uterus and at moderate levels in liver.

The protein resides in the secreted. Functionally, binds IGF1 and IGF2 with a relatively low affinity. Stimulates prostacyclin (PGI2) production. Stimulates cell adhesion. Acts as a ligand for CD93 to play a role in angiogenesis. The protein is Insulin-like growth factor-binding protein 7 (Igfbp7) of Mus musculus (Mouse).